A 548-amino-acid polypeptide reads, in one-letter code: ATP synthase subunit alpha (548 aa).

An ATP-binding site is contributed by 172 to 179 (GDRKTGKT). Positions 526–548 (AEAMDEADVEKESVKVRKPAPKK) are disordered.

This sequence belongs to the ATPase alpha/beta chains family. As to quaternary structure, F-type ATPases have 2 components, CF(1) - the catalytic core - and CF(0) - the membrane proton channel. CF(1) has five subunits: alpha(3), beta(3), gamma(1), delta(1), epsilon(1). CF(0) has three main subunits: a(1), b(2) and c(9-12). The alpha and beta chains form an alternating ring which encloses part of the gamma chain. CF(1) is attached to CF(0) by a central stalk formed by the gamma and epsilon chains, while a peripheral stalk is formed by the delta and b chains.

The protein resides in the cell membrane. It catalyses the reaction ATP + H2O + 4 H(+)(in) = ADP + phosphate + 5 H(+)(out). Produces ATP from ADP in the presence of a proton gradient across the membrane. The alpha chain is a regulatory subunit. In Mycolicibacterium gilvum (strain PYR-GCK) (Mycobacterium gilvum (strain PYR-GCK)), this protein is ATP synthase subunit alpha.